The sequence spans 428 residues: Serine--tRNA ligase (428 aa).

Thr231–Glu233 is a binding site for L-serine. ATP-binding positions include Arg262–Glu264 and Val278. An L-serine-binding site is contributed by Glu285. Residue Glu349–Ser352 coordinates ATP. Thr384 is an L-serine binding site.

It belongs to the class-II aminoacyl-tRNA synthetase family. Type-1 seryl-tRNA synthetase subfamily. Homodimer. The tRNA molecule binds across the dimer.

It localises to the cytoplasm. It carries out the reaction tRNA(Ser) + L-serine + ATP = L-seryl-tRNA(Ser) + AMP + diphosphate + H(+). The enzyme catalyses tRNA(Sec) + L-serine + ATP = L-seryl-tRNA(Sec) + AMP + diphosphate + H(+). It participates in aminoacyl-tRNA biosynthesis; selenocysteinyl-tRNA(Sec) biosynthesis; L-seryl-tRNA(Sec) from L-serine and tRNA(Sec): step 1/1. Its function is as follows. Catalyzes the attachment of serine to tRNA(Ser). Is also able to aminoacylate tRNA(Sec) with serine, to form the misacylated tRNA L-seryl-tRNA(Sec), which will be further converted into selenocysteinyl-tRNA(Sec). The sequence is that of Serine--tRNA ligase from Bifidobacterium longum (strain DJO10A).